Here is a 330-residue protein sequence, read N- to C-terminus: Ketol-acid reductoisomerase (NADP(+)) (330 aa).

One can recognise a KARI N-terminal Rossmann domain in the interval 1–181 (MKVLYDDDVN…GLTRAGVIET (181 aa)). Residues 24 to 27 (YGSQ), Arg47, Ser52, and 82 to 85 (DEIQ) each bind NADP(+). The active site involves His107. Residue Gly133 participates in NADP(+) binding. Positions 182-327 (TYREETETDL…KNLRIACGLQ (146 aa)) constitute a KARI C-terminal knotted domain. Mg(2+) contacts are provided by Asp190, Glu194, Glu226, and Glu230. Ser251 contributes to the substrate binding site.

This sequence belongs to the ketol-acid reductoisomerase family. It depends on Mg(2+) as a cofactor.

It catalyses the reaction (2R)-2,3-dihydroxy-3-methylbutanoate + NADP(+) = (2S)-2-acetolactate + NADPH + H(+). The enzyme catalyses (2R,3R)-2,3-dihydroxy-3-methylpentanoate + NADP(+) = (S)-2-ethyl-2-hydroxy-3-oxobutanoate + NADPH + H(+). It functions in the pathway amino-acid biosynthesis; L-isoleucine biosynthesis; L-isoleucine from 2-oxobutanoate: step 2/4. It participates in amino-acid biosynthesis; L-valine biosynthesis; L-valine from pyruvate: step 2/4. Involved in the biosynthesis of branched-chain amino acids (BCAA). Catalyzes an alkyl-migration followed by a ketol-acid reduction of (S)-2-acetolactate (S2AL) to yield (R)-2,3-dihydroxy-isovalerate. In the isomerase reaction, S2AL is rearranged via a Mg-dependent methyl migration to produce 3-hydroxy-3-methyl-2-ketobutyrate (HMKB). In the reductase reaction, this 2-ketoacid undergoes a metal-dependent reduction by NADPH to yield (R)-2,3-dihydroxy-isovalerate. This Methanosphaera stadtmanae (strain ATCC 43021 / DSM 3091 / JCM 11832 / MCB-3) protein is Ketol-acid reductoisomerase (NADP(+)).